Reading from the N-terminus, the 231-residue chain is NADH-ubiquinone oxidoreductase chain 4 (231 aa).

6 helical membrane-spanning segments follow: residues 1–21 (PIAGSMVLAAILLKLGGYGII), 34–54 (MFLPFIVLALWGAILANLTCL), 63–85 (IAYSSISHMGLVVATIIIQTPWG), 89–111 (ALALMIAHGFTSSALFCLANTTY), 128–148 (ILPMATTWWLLANLMNIAIPP), and 169–189 (TIIMLGLSMLITASYSLHMFL).

Belongs to the complex I subunit 4 family.

It localises to the mitochondrion membrane. It catalyses the reaction a ubiquinone + NADH + 5 H(+)(in) = a ubiquinol + NAD(+) + 4 H(+)(out). In terms of biological role, core subunit of the mitochondrial membrane respiratory chain NADH dehydrogenase (Complex I) that is believed to belong to the minimal assembly required for catalysis. Complex I functions in the transfer of electrons from NADH to the respiratory chain. The immediate electron acceptor for the enzyme is believed to be ubiquinone. In Bothrocophias hyoprora (Amazonian hognose viper), this protein is NADH-ubiquinone oxidoreductase chain 4 (MT-ND4).